A 448-amino-acid chain; its full sequence is 3-phosphoshikimate 1-carboxyvinyltransferase (448 aa).

3 residues coordinate 3-phosphoshikimate: Lys-38, Ser-39, and Arg-43. Residue Lys-38 participates in phosphoenolpyruvate binding. The phosphoenolpyruvate site is built by Gly-111 and Arg-140. 3-phosphoshikimate is bound by residues Ser-185, Gln-187, Asp-335, and Lys-362. Phosphoenolpyruvate is bound at residue Gln-187. Asp-335 functions as the Proton acceptor in the catalytic mechanism. Arg-366 and Arg-408 together coordinate phosphoenolpyruvate.

Belongs to the EPSP synthase family. Monomer.

Its subcellular location is the cytoplasm. It catalyses the reaction 3-phosphoshikimate + phosphoenolpyruvate = 5-O-(1-carboxyvinyl)-3-phosphoshikimate + phosphate. Its pathway is metabolic intermediate biosynthesis; chorismate biosynthesis; chorismate from D-erythrose 4-phosphate and phosphoenolpyruvate: step 6/7. Catalyzes the transfer of the enolpyruvyl moiety of phosphoenolpyruvate (PEP) to the 5-hydroxyl of shikimate-3-phosphate (S3P) to produce enolpyruvyl shikimate-3-phosphate and inorganic phosphate. This Synechococcus elongatus (strain ATCC 33912 / PCC 7942 / FACHB-805) (Anacystis nidulans R2) protein is 3-phosphoshikimate 1-carboxyvinyltransferase.